We begin with the raw amino-acid sequence, 207 residues long: Guanylate kinase (207 aa).

In terms of domain architecture, Guanylate kinase-like spans 4-184 (GTLYIVSAPS…ALMDFKAIIR (181 aa)). 11–18 (APSGAGKS) contributes to the ATP binding site.

It belongs to the guanylate kinase family.

It localises to the cytoplasm. The enzyme catalyses GMP + ATP = GDP + ADP. In terms of biological role, essential for recycling GMP and indirectly, cGMP. In Vibrio vulnificus (strain CMCP6), this protein is Guanylate kinase.